The sequence spans 455 residues: MSPVSPRSLTLIGAGLAGCLLAILLSRRGWQVTVYERRGDPRIKGYESGRSINLALAERGRHALRQAGAEDAVMAKAVMMRGRMVHPIIGQPQLQRYGRDDSEVIWSIHRAALNVALLDLAEQAGARVHFYRRLHTVGFDAGYARFIDDRDDQPHEIHFQSLIGSDGAGSALRAAMQRKSPLGERTEFLDHSYKELEIPPQPGGGFRIEGNALHLWPRGRYMCIALPNDGGTFTVTLFLPNAGEPSFATTRTGDEALALFARDFPDALPLIPQLREHWEEHPPGLLGTLTLDRWHLDGRALLIGDAAHAMVPFHGQGMNCAFEDCVALADQLDAHDDLASAFAAFEAARRDDAAAIQQMALENYLEMRDRVDDPDFLLQRELEQKLQARWPTRFVPHYTMVTFLRTRYSIALARSEIQRQILVEATRGHRDLSRIDWAALEAVVHARLEPLDGAH.

The protein belongs to the aromatic-ring hydroxylase family. KMO subfamily. Requires FAD as cofactor.

It catalyses the reaction L-kynurenine + NADPH + O2 + H(+) = 3-hydroxy-L-kynurenine + NADP(+) + H2O. The protein operates within cofactor biosynthesis; NAD(+) biosynthesis; quinolinate from L-kynurenine: step 1/3. Its function is as follows. Catalyzes the hydroxylation of L-kynurenine (L-Kyn) to form 3-hydroxy-L-kynurenine (L-3OHKyn). Required for synthesis of quinolinic acid. The protein is Kynurenine 3-monooxygenase of Xanthomonas euvesicatoria pv. vesicatoria (strain 85-10) (Xanthomonas campestris pv. vesicatoria).